We begin with the raw amino-acid sequence, 482 residues long: Cytochrome P450 monooxygenase pynD (482 aa).

An N-terminal signal peptide occupies residues 1-22; that stretch reads MWRIPVIVALVAGLLYWVRKQG. The N-linked (GlcNAc...) asparagine glycan is linked to Asn401. Cys417 is a heme binding site.

The protein belongs to the cytochrome P450 family. The cofactor is heme.

It functions in the pathway secondary metabolite biosynthesis. Cytochrome P450 monooxygenase; part of the gene cluster that mediates the biosynthesis of pyranonigrins, a family of antioxidative compounds. The first step of pyranonigrins biosynthesis is performed by the hybrid PKS-NRPS synthetase that condenses 6 malonyl-CoA units to an acetyl starter unit, to form a 1,3,5-trioxotetradecane-6,8-dienyl-ACP. The enoyl reductase (ER) domain of pynA is likely to be functional during the first two rounds of polyketide chain extension, to generate the saturated C-C bonds of the alkyl side chain. PynA subsequently forms the amide bond between the acyl chain and L-serine. Although pynA has a terminal reductase domain, it appears to require the thioesterase pynI for the release of the straight-chain intermediate from pynA via the formation of a tetramic acid pyranonigrin J. The methyltransferase pynC then coverts pyranonigrin J to pyranonigrin I via N-methylation. The FAD-dependent monooxygenase pynG catalyzes an epoxidation-mediated cyclization to form the dihydro-gamma-pyrone moiety, followed by pynD-catalyzed oxidation of the alcohol to the ketone and enolization to yield the characteristic tetramic acid-fused gamma-pyrone core of pyranonigrin H. Pyranonigrin H is substrate of pynH for dehydration-mediated exo-methylene formation from the serine side chain to produce pyranonigrin E, before the oxidase pynE reduces the exo-methylene of pyranonigrin E into a pendant methyl to form pyranonigrin G. The FAD-linked oxidoreductase pynB performs the reverse reaction and converts pyranonigrin G back to pyranonigrin E. This chain is Cytochrome P450 monooxygenase pynD, found in Aspergillus niger (strain ATCC MYA-4892 / CBS 513.88 / FGSC A1513).